The chain runs to 123 residues: Thioredoxin H-type (123 aa).

Residues 2–119 enclose the Thioredoxin domain; the sequence is AATAELIPAG…IEAKLLKHSQ (118 aa). Cysteines 45 and 48 form a disulfide.

The protein belongs to the thioredoxin family. Plant H-type subfamily.

Its subcellular location is the cytoplasm. Functionally, participates in various redox reactions through the reversible oxidation of the active center dithiol to a disulfide. The H form is known to activate a number of cytosolic enzymes. In Brassica campestris (Field mustard), this protein is Thioredoxin H-type (PEC-2).